A 126-amino-acid chain; its full sequence is Fluoride-specific ion channel FluC (126 aa).

A run of 4 helical transmembrane segments spans residues 3–23 (PYLL…RFLI), 37–57 (VGTL…ALYF), 68–88 (LVIT…LETV), and 101–121 (TNIT…MMLF). 2 residues coordinate Na(+): G75 and T78.

The protein belongs to the fluoride channel Fluc/FEX (TC 1.A.43) family.

The protein resides in the cell inner membrane. The catalysed reaction is fluoride(in) = fluoride(out). Na(+) is not transported, but it plays an essential structural role and its presence is essential for fluoride channel function. In terms of biological role, fluoride-specific ion channel. Important for reducing fluoride concentration in the cell, thus reducing its toxicity. This Sulfurovum sp. (strain NBC37-1) protein is Fluoride-specific ion channel FluC.